Consider the following 201-residue polypeptide: Proteasome subunit beta 1 (201 aa).

The propeptide at 1–10 (MNGSPSAMKG) is removed in mature form; by autocatalysis. Thr11 serves as the catalytic Nucleophile.

This sequence belongs to the peptidase T1B family. The 20S proteasome core is composed of 14 alpha and 14 beta subunits that assemble into four stacked heptameric rings, resulting in a barrel-shaped structure. The two inner rings, each composed of seven catalytic beta subunits, are sandwiched by two outer rings, each composed of seven alpha subunits. The catalytic chamber with the active sites is on the inside of the barrel. Has a gated structure, the ends of the cylinder being occluded by the N-termini of the alpha-subunits. Is capped at one or both ends by the proteasome regulatory ATPase, PAN.

Its subcellular location is the cytoplasm. The catalysed reaction is Cleavage of peptide bonds with very broad specificity.. Its activity is regulated as follows. The formation of the proteasomal ATPase PAN-20S proteasome complex, via the docking of the C-termini of PAN into the intersubunit pockets in the alpha-rings, triggers opening of the gate for substrate entry. Interconversion between the open-gate and close-gate conformations leads to a dynamic regulation of the 20S proteasome proteolysis activity. In terms of biological role, component of the proteasome core, a large protease complex with broad specificity involved in protein degradation. This is Proteasome subunit beta 1 from Thermococcus gammatolerans (strain DSM 15229 / JCM 11827 / EJ3).